The sequence spans 353 residues: Uroporphyrinogen decarboxylase (353 aa).

Substrate contacts are provided by residues 33 to 37 (RQAGR), Asp-82, Tyr-158, Ser-213, and His-332.

This sequence belongs to the uroporphyrinogen decarboxylase family. In terms of assembly, homodimer.

The protein localises to the cytoplasm. The catalysed reaction is uroporphyrinogen III + 4 H(+) = coproporphyrinogen III + 4 CO2. Its pathway is porphyrin-containing compound metabolism; protoporphyrin-IX biosynthesis; coproporphyrinogen-III from 5-aminolevulinate: step 4/4. Catalyzes the decarboxylation of four acetate groups of uroporphyrinogen-III to yield coproporphyrinogen-III. The protein is Uroporphyrinogen decarboxylase of Gluconobacter oxydans (strain 621H) (Gluconobacter suboxydans).